The chain runs to 678 residues: Depolymerase 2, capsule K56-specific (678 aa).

The protein in the N-terminal section; belongs to the Przondovirus depolymerase 2 family. As to quaternary structure, homotrimer. Interacts (via N-terminus) with depolymerase 1 (via N-terminus); this interaction probably gives rise to a branched tailspike.

It is found in the virion. Its function is as follows. Functions as a receptor binding protein (RBP) and probably mediates the attachment to the host capsular exopolysaccharides. Displays a depolymerase activity that specifically degrades the K56-type polysaccharides of Klebsiella pneumoniae capsule, which allows the phage to reach the host cell membrane and bind the entry receptor. The sequence is that of Depolymerase 2, capsule K56-specific from Klebsiella pneumoniae (Bacteriophage KN3-1).